The primary structure comprises 445 residues: tRNA(Ile)-lysidine synthase (445 aa).

ATP is bound at residue 30 to 35 (SGGLDS).

It belongs to the tRNA(Ile)-lysidine synthase family.

The protein localises to the cytoplasm. It catalyses the reaction cytidine(34) in tRNA(Ile2) + L-lysine + ATP = lysidine(34) in tRNA(Ile2) + AMP + diphosphate + H(+). In terms of biological role, ligates lysine onto the cytidine present at position 34 of the AUA codon-specific tRNA(Ile) that contains the anticodon CAU, in an ATP-dependent manner. Cytidine is converted to lysidine, thus changing the amino acid specificity of the tRNA from methionine to isoleucine. This Alkalilimnicola ehrlichii (strain ATCC BAA-1101 / DSM 17681 / MLHE-1) protein is tRNA(Ile)-lysidine synthase.